A 210-amino-acid polypeptide reads, in one-letter code: Outer-membrane lipoprotein LolB (210 aa).

Residues 1-26 (MSKLKIDTKRRFSLLIALVLIISLSS) form the signal peptide. Residue Cys27 is the site of N-palmitoyl cysteine attachment. Cys27 is lipidated: S-diacylglycerol cysteine.

Belongs to the LolB family. In terms of assembly, monomer.

Its subcellular location is the cell outer membrane. Its function is as follows. Plays a critical role in the incorporation of lipoproteins in the outer membrane after they are released by the LolA protein. The chain is Outer-membrane lipoprotein LolB from Francisella tularensis subsp. holarctica (strain FTNF002-00 / FTA).